Reading from the N-terminus, the 469-residue chain is Sulfate adenylyltransferase subunit 1 (469 aa).

In terms of domain architecture, tr-type G spans 22–236 (KDMLRVLTCG…LLNTVSVEQD (215 aa)). Residues 31–38 (GSVDDGKS) form a G1 region. Position 31 to 38 (31 to 38 (GSVDDGKS)) interacts with GTP. The G2 stretch occupies residues 89 to 93 (GITID). Positions 110–113 (DTPG) are G3. GTP is bound by residues 110-114 (DTPGH) and 165-168 (NKMD). The segment at 165-168 (NKMD) is G4. Residues 202–204 (SAL) form a G5 region.

Belongs to the TRAFAC class translation factor GTPase superfamily. Classic translation factor GTPase family. CysN/NodQ subfamily. As to quaternary structure, heterodimer composed of CysD, the smaller subunit, and CysN.

It carries out the reaction sulfate + ATP + H(+) = adenosine 5'-phosphosulfate + diphosphate. Its pathway is sulfur metabolism; hydrogen sulfide biosynthesis; sulfite from sulfate: step 1/3. Its function is as follows. With CysD forms the ATP sulfurylase (ATPS) that catalyzes the adenylation of sulfate producing adenosine 5'-phosphosulfate (APS) and diphosphate, the first enzymatic step in sulfur assimilation pathway. APS synthesis involves the formation of a high-energy phosphoric-sulfuric acid anhydride bond driven by GTP hydrolysis by CysN coupled to ATP hydrolysis by CysD. The protein is Sulfate adenylyltransferase subunit 1 of Shewanella woodyi (strain ATCC 51908 / MS32).